Consider the following 153-residue polypeptide: Aspartate carbamoyltransferase regulatory chain (153 aa).

The Zn(2+) site is built by cysteine 109, cysteine 114, cysteine 138, and cysteine 141.

Belongs to the PyrI family. Contains catalytic and regulatory chains. Zn(2+) is required as a cofactor.

In terms of biological role, involved in allosteric regulation of aspartate carbamoyltransferase. This chain is Aspartate carbamoyltransferase regulatory chain, found in Salmonella newport (strain SL254).